Here is a 238-residue protein sequence, read N- to C-terminus: Aspartate/glutamate leucyltransferase (238 aa).

It belongs to the R-transferase family. Bpt subfamily.

The protein resides in the cytoplasm. The catalysed reaction is N-terminal L-glutamyl-[protein] + L-leucyl-tRNA(Leu) = N-terminal L-leucyl-L-glutamyl-[protein] + tRNA(Leu) + H(+). The enzyme catalyses N-terminal L-aspartyl-[protein] + L-leucyl-tRNA(Leu) = N-terminal L-leucyl-L-aspartyl-[protein] + tRNA(Leu) + H(+). Functionally, functions in the N-end rule pathway of protein degradation where it conjugates Leu from its aminoacyl-tRNA to the N-termini of proteins containing an N-terminal aspartate or glutamate. This chain is Aspartate/glutamate leucyltransferase, found in Shewanella sp. (strain MR-7).